Reading from the N-terminus, the 198-residue chain is Probable GTP-binding protein EngB (198 aa).

Positions 21 to 195 (NFSEVAFLGR…EDIIINQTLG (175 aa)) constitute an EngB-type G domain. Residues 29-36 (GRSNVGKS), 56-60 (GKTQL), 81-84 (DLPG), 151-154 (TKCD), and 174-176 (VSN) contribute to the GTP site. Mg(2+) contacts are provided by serine 36 and threonine 58.

It belongs to the TRAFAC class TrmE-Era-EngA-EngB-Septin-like GTPase superfamily. EngB GTPase family. It depends on Mg(2+) as a cofactor.

Necessary for normal cell division and for the maintenance of normal septation. The polypeptide is Probable GTP-binding protein EngB (Campylobacter jejuni subsp. jejuni serotype O:23/36 (strain 81-176)).